A 53-amino-acid chain; its full sequence is UPF0391 membrane protein Bxeno_A2958 (53 aa).

Transmembrane regions (helical) follow at residues 5–25 and 30–50; these read AIVFFVIAIIAAVFGFTGIAA and IAKILFYIFLVVFVVTLLLGV.

The protein belongs to the UPF0391 family.

The protein localises to the cell membrane. The protein is UPF0391 membrane protein Bxeno_A2958 of Paraburkholderia xenovorans (strain LB400).